The chain runs to 432 residues: Acyl-coenzyme A thioesterase 3 (432 aa).

Catalysis depends on charge relay system residues serine 243, aspartate 337, and histidine 371. A Microbody targeting signal motif is present at residues alanine 430–leucine 432.

The protein belongs to the C/M/P thioester hydrolase family. In terms of tissue distribution, widely expressed. Highly expressed in the kidney, expressed at low level in the liver. Isoform 2 is expressed in the kidney, but not in the liver. Isoform 1 is liver-specific. Highly expressed in kidney (at protein level).

Its subcellular location is the peroxisome. The catalysed reaction is hexadecanoyl-CoA + H2O = hexadecanoate + CoA + H(+). The enzyme catalyses decanoyl-CoA + H2O = decanoate + CoA + H(+). It catalyses the reaction dodecanoyl-CoA + H2O = dodecanoate + CoA + H(+). It carries out the reaction tetradecanoyl-CoA + H2O = tetradecanoate + CoA + H(+). The catalysed reaction is octadecanoyl-CoA + H2O = octadecanoate + CoA + H(+). The enzyme catalyses eicosanoyl-CoA + H2O = eicosanoate + CoA + H(+). It catalyses the reaction (9Z)-octadecenoyl-CoA + H2O = (9Z)-octadecenoate + CoA + H(+). It carries out the reaction (9Z,12Z)-octadecadienoyl-CoA + H2O = (9Z,12Z)-octadecadienoate + CoA + H(+). The catalysed reaction is (5Z,8Z,11Z,14Z)-eicosatetraenoyl-CoA + H2O = (5Z,8Z,11Z,14Z)-eicosatetraenoate + CoA + H(+). The enzyme catalyses tetracosanoyl-CoA + H2O = tetracosanoate + CoA + H(+). It catalyses the reaction hexacosanoyl-CoA + H2O = hexacosanoate + CoA + H(+). It carries out the reaction docosanoyl-CoA + H2O = docosanoate + CoA + H(+). The catalysed reaction is (9Z)-hexadecenoyl-CoA + H2O = (9Z)-hexadecenoate + CoA + H(+). Its pathway is lipid metabolism; fatty acid metabolism. Functionally, catalyzes the hydrolysis of acyl-CoAs into free fatty acids and coenzyme A (CoASH), regulating their respective intracellular levels. Mainly active on long-chain acyl-CoAs. May have a function in termination of beta-oxidation of fatty acids. The polypeptide is Acyl-coenzyme A thioesterase 3 (Acot3) (Mus musculus (Mouse)).